The primary structure comprises 145 residues: Neuromedin-S (145 aa).

Residues M1–G25 form the signal peptide. Propeptides lie at residues F26–R64, F65–R100, and M101–T103. Position 136 is an asparagine amide (N136). Positions N139–W145 are excised as a propeptide.

Belongs to the NmU family.

It is found in the secreted. Implicated in the regulation of circadian rhythms through autocrine and/or paracrine actions. The polypeptide is Neuromedin-S (NMS) (Bos taurus (Bovine)).